The primary structure comprises 425 residues: Pleckstrin homology domain-containing family A member 2 (425 aa).

The region spanning 7 to 113 is the PH 1 domain; sequence QNRICGFLDI…WVEALNQASK (107 aa). Lysine 141 participates in a covalent cross-link: Glycyl lysine isopeptide (Lys-Gly) (interchain with G-Cter in SUMO2). At serine 184 the chain carries Phosphoserine. Positions 198–298 constitute a PH 2 domain; it reads PLIKSGYCVK…WIEGIGAAVQ (101 aa). Polar residues predominate over residues 310–331; sequence SRSISLTRPGSSTLTSAPNSIL. The disordered stretch occupies residues 310 to 425; the sequence is SRSISLTRPG…DDENIRTSDV (116 aa). 2 positions are modified to phosphoserine: serine 314 and serine 349. 2 stretches are compositionally biased toward basic and acidic residues: residues 363 to 375 and 400 to 410; these read AEEK…HAPE and RSEPQHPKEKP.

In terms of assembly, binds MPDZ and PTPN13.

Its subcellular location is the cytoplasm. It is found in the cell membrane. The protein localises to the nucleus. Functionally, binds specifically to phosphatidylinositol 3,4-diphosphate (PtdIns3,4P2), but not to other phosphoinositides. May recruit other proteins to the plasma membrane. The chain is Pleckstrin homology domain-containing family A member 2 (Plekha2) from Mus musculus (Mouse).